Here is a 509-residue protein sequence, read N- to C-terminus: H/ACA ribonucleoprotein complex subunit DKC1 (509 aa).

The tract at residues 1–25 is disordered; that stretch reads MADAEAAMTFPKKHKKKKERKPLPE. Ala2 is modified (N-acetylalanine). Residues 2 to 22 are nucleolar localization; the sequence is ADAEAAMTFPKKHKKKKERKP. Basic residues predominate over residues 11 to 20; the sequence is PKKHKKKKER. Residues Lys21, Lys40, and Lys44 each participate in a glycyl lysine isopeptide (Lys-Gly) (interchain with G-Cter in SUMO2) cross-link. Residue Asp126 is the Nucleophile of the active site. Lys192 participates in a covalent cross-link: Glycyl lysine isopeptide (Lys-Gly) (interchain with G-Cter in SUMO2). The region spanning 297-372 is the PUA domain; that stretch reads HKRLVMKDSA…VVAKIKRVIM (76 aa). The interval 381 to 509 is disordered; the sequence is WGLGPKASQK…KARAAEELSG (129 aa). Ser388 bears the Phosphoserine mark. Glycyl lysine isopeptide (Lys-Gly) (interchain with G-Cter in SUMO2) cross-links involve residues Lys395 and Lys425. Residues 416-425 show a composition bias toward basic and acidic residues; it reads DYVDYSDSSK. A nuclear and nucleolar localization region spans residues 447 to 509; sequence KRKRDSDSDA…KARAAEELSG (63 aa). A phosphoserine mark is found at Ser452 and Ser454. The residue at position 460 (Thr460) is a Phosphothreonine. Residues 466-475 show a composition bias toward basic residues; sequence RVKKEKKKKK. A compositionally biased stretch (acidic residues) spans 481-490; sequence GEEAAEDGDG. Ser508 is subject to Phosphoserine.

Belongs to the pseudouridine synthase TruB family. Part of the H/ACA small nucleolar ribonucleoprotein (H/ACA snoRNP) complex, which contains NHP2/NOLA2, GAR1/NOLA1, NOP10/NOLA3, and DKC1/NOLA4, which is presumed to be the catalytic subunit. The complex contains a stable core formed by binding of one or two NOP10-DKC1 heterodimers to NHP2; GAR1 subsequently binds to this core via DKC1. The complex binds a box H/ACA small nucleolar RNA (snoRNA), which may target the specific site of modification within the RNA substrate. During assembly, the complex contains NAF1 instead of GAR1/NOLA1. The complex also interacts with TERC, which contains a 3'-terminal domain related to the box H/ACA snoRNAs. Specific interactions with snoRNAs or TERC are mediated by GAR1 and NHP2. Associates with NOLC1/NOPP140. H/ACA snoRNPs interact with the SMN complex, consisting of SMN1 or SMN2, GEMIN2/SIP1, DDX20/GEMIN3, and GEMIN4. This is mediated by interaction between GAR1 and SMN1 or SMN2. The SMN complex may be required for correct assembly of the H/ACA snoRNP complex. Component of the telomerase holoenzyme complex composed of one molecule of TERT, one molecule of WRAP53/TCAB1, two molecules of H/ACA ribonucleoprotein complex subunits DKC1, NOP10, NHP2 and GAR1, and a telomerase RNA template component (TERC). The telomerase holoenzyme complex is associated with TEP1, SMG6/EST1A and POT1. Interacts with SHQ1; this interaction may lead to the stabilization of DKC1, from the time of its synthesis until its association with NOP10, NHP2, and NAF1 at the nascent H/ACA RNA. Interacts with HMBOX1. Interacts with DHX36.

It localises to the nucleus. The protein resides in the nucleolus. The protein localises to the cajal body. It carries out the reaction uridine in 5S rRNA = pseudouridine in 5S rRNA. In terms of biological role, catalytic subunit of H/ACA small nucleolar ribonucleoprotein (H/ACA snoRNP) complex, which catalyzes pseudouridylation of rRNA. This involves the isomerization of uridine such that the ribose is subsequently attached to C5, instead of the normal N1. Each rRNA can contain up to 100 pseudouridine ('psi') residues, which may serve to stabilize the conformation of rRNAs. Required for ribosome biogenesis and telomere maintenance. Also required for correct processing or intranuclear trafficking of TERC, the RNA component of the telomerase reverse transcriptase (TERT) holoenzyme. In Rattus norvegicus (Rat), this protein is H/ACA ribonucleoprotein complex subunit DKC1 (Dkc1).